We begin with the raw amino-acid sequence, 345 residues long: Biotin synthase (345 aa).

The region spanning 38–256 is the Radical SAM core domain; sequence QQVQVSTLLS…IAVARIMMPS (219 aa). Positions 53, 57, and 60 each coordinate [4Fe-4S] cluster. C97, C128, C188, and R260 together coordinate [2Fe-2S] cluster.

It belongs to the radical SAM superfamily. Biotin synthase family. Homodimer. Requires [4Fe-4S] cluster as cofactor. The cofactor is [2Fe-2S] cluster.

The enzyme catalyses (4R,5S)-dethiobiotin + (sulfur carrier)-SH + 2 reduced [2Fe-2S]-[ferredoxin] + 2 S-adenosyl-L-methionine = (sulfur carrier)-H + biotin + 2 5'-deoxyadenosine + 2 L-methionine + 2 oxidized [2Fe-2S]-[ferredoxin]. The protein operates within cofactor biosynthesis; biotin biosynthesis; biotin from 7,8-diaminononanoate: step 2/2. Functionally, catalyzes the conversion of dethiobiotin (DTB) to biotin by the insertion of a sulfur atom into dethiobiotin via a radical-based mechanism. In Photorhabdus laumondii subsp. laumondii (strain DSM 15139 / CIP 105565 / TT01) (Photorhabdus luminescens subsp. laumondii), this protein is Biotin synthase.